The sequence spans 319 residues: Ribonuclease Z (319 aa).

His-62, His-64, Asp-66, His-67, His-145, Asp-215, and His-273 together coordinate Zn(2+). Asp-66 serves as the catalytic Proton acceptor.

The protein belongs to the RNase Z family. Homodimer. Zn(2+) serves as cofactor.

The enzyme catalyses Endonucleolytic cleavage of RNA, removing extra 3' nucleotides from tRNA precursor, generating 3' termini of tRNAs. A 3'-hydroxy group is left at the tRNA terminus and a 5'-phosphoryl group is left at the trailer molecule.. In terms of biological role, zinc phosphodiesterase, which displays some tRNA 3'-processing endonuclease activity. Probably involved in tRNA maturation, by removing a 3'-trailer from precursor tRNA. This Borreliella burgdorferi (strain ATCC 35210 / DSM 4680 / CIP 102532 / B31) (Borrelia burgdorferi) protein is Ribonuclease Z.